The chain runs to 92 residues: Sec-independent protein translocase protein TatA (92 aa).

Residues Ile-2 to Phe-22 traverse the membrane as a helical segment. The segment at Lys-43 to Gly-92 is disordered. Positions Glu-53–Gln-80 are enriched in basic and acidic residues.

It belongs to the TatA/E family. The Tat system comprises two distinct complexes: a TatABC complex, containing multiple copies of TatA, TatB and TatC subunits, and a separate TatA complex, containing only TatA subunits. Substrates initially bind to the TatABC complex, which probably triggers association of the separate TatA complex to form the active translocon.

It is found in the cell membrane. Functionally, part of the twin-arginine translocation (Tat) system that transports large folded proteins containing a characteristic twin-arginine motif in their signal peptide across membranes. TatA could form the protein-conducting channel of the Tat system. The protein is Sec-independent protein translocase protein TatA of Rubrobacter xylanophilus (strain DSM 9941 / JCM 11954 / NBRC 16129 / PRD-1).